We begin with the raw amino-acid sequence, 120 residues long: Nitrogenase-stabilizing/protective protein NifW (120 aa).

This sequence belongs to the NifW family. As to quaternary structure, homotrimer; associates with NifD.

Its function is as follows. May protect the nitrogenase Fe-Mo protein from oxidative damage. The sequence is that of Nitrogenase-stabilizing/protective protein NifW from Rhodospirillum rubrum (strain ATCC 11170 / ATH 1.1.1 / DSM 467 / LMG 4362 / NCIMB 8255 / S1).